The primary structure comprises 439 residues: C4-dicarboxylate transport protein (439 aa).

A run of 9 helical transmembrane segments spans residues 10–30 (LYVQVLAAIVIGVVLGHFYPP), 45–65 (LIKMIIAPVIFCTVVLGIAGM), 77–97 (LALLYFEIVSTLALIVGLVLV), 145–165 (AFAKGDILQVLLISVLFGFAL), 185–205 (VLFAIVGTIMKAAPIGAFGAM), 223–243 (LMGTFYLTCLFFIFAVLGTIT), 290–310 (VVGLVIPTGYSFNLDGTAIYL), 332–352 (TLLAVLLLTSKGAAGITGSGF), and 353–373 (IVLAASLSAVGHLPVAGLALI). Positions 415–439 (LNGQTAEEASAPQALPDRMESRIHH) are disordered.

The protein belongs to the dicarboxylate/amino acid:cation symporter (DAACS) (TC 2.A.23) family.

It is found in the cell inner membrane. Its function is as follows. Responsible for the transport of dicarboxylates such as succinate, fumarate, and malate from the periplasm across the membrane. This Verminephrobacter eiseniae (strain EF01-2) protein is C4-dicarboxylate transport protein.